A 166-amino-acid chain; its full sequence is NAD(P)H-quinone oxidoreductase subunit I, chloroplastic (166 aa).

4Fe-4S ferredoxin-type domains lie at 55-84 (GRIH…VDWK) and 95-124 (LNYS…MTEE). Residues Cys64, Cys67, Cys70, Cys74, Cys104, Cys107, Cys110, and Cys114 each contribute to the [4Fe-4S] cluster site.

It belongs to the complex I 23 kDa subunit family. In terms of assembly, NDH is composed of at least 16 different subunits, 5 of which are encoded in the nucleus. Requires [4Fe-4S] cluster as cofactor.

The protein resides in the plastid. It localises to the chloroplast thylakoid membrane. It catalyses the reaction a plastoquinone + NADH + (n+1) H(+)(in) = a plastoquinol + NAD(+) + n H(+)(out). The enzyme catalyses a plastoquinone + NADPH + (n+1) H(+)(in) = a plastoquinol + NADP(+) + n H(+)(out). NDH shuttles electrons from NAD(P)H:plastoquinone, via FMN and iron-sulfur (Fe-S) centers, to quinones in the photosynthetic chain and possibly in a chloroplast respiratory chain. The immediate electron acceptor for the enzyme in this species is believed to be plastoquinone. Couples the redox reaction to proton translocation, and thus conserves the redox energy in a proton gradient. The chain is NAD(P)H-quinone oxidoreductase subunit I, chloroplastic from Silphium perfoliatum (Cup plant).